A 149-amino-acid polypeptide reads, in one-letter code: Large ribosomal subunit protein uL13 (149 aa).

It belongs to the universal ribosomal protein uL13 family. In terms of assembly, part of the 50S ribosomal subunit.

This protein is one of the early assembly proteins of the 50S ribosomal subunit, although it is not seen to bind rRNA by itself. It is important during the early stages of 50S assembly. The chain is Large ribosomal subunit protein uL13 from Thermotoga maritima (strain ATCC 43589 / DSM 3109 / JCM 10099 / NBRC 100826 / MSB8).